An 85-amino-acid polypeptide reads, in one-letter code: Small ribosomal subunit protein bS16 (85 aa).

The protein belongs to the bacterial ribosomal protein bS16 family.

This is Small ribosomal subunit protein bS16 from Neorickettsia sennetsu (strain ATCC VR-367 / Miyayama) (Ehrlichia sennetsu).